Here is a 111-residue protein sequence, read N- to C-terminus: Disintegrin DS-AN (111 aa).

Positions 1 to 20 are cleaved as a signal peptide; the sequence is MIQVLLVIICLAVFPYQGSC. A propeptide spanning residues 21-47 is cleaved from the precursor; that stretch reads IILESGNVNDYEIVYPKKLIVLPTGAM. Residues 47-111 form the Disintegrin domain; sequence MNSPHPCCDP…PDCPRNPYKD (65 aa). Intrachain disulfides connect Cys53–Cys76, Cys67–Cys73, Cys72–Cys97, and Cys85–Cys104. Positions 89-91 match the Cell attachment site motif; the sequence is RGD.

As to quaternary structure, heterodimer; disulfide-linked.

Its subcellular location is the secreted. Its function is as follows. Inhibits ADP-induced platelet aggregation in human platelet-rich plasma (IC(50) is 8 uM). This Atheris nitschei (Great lakes bush viper) protein is Disintegrin DS-AN.